The sequence spans 749 residues: MSFIDPYQHIIVEHQYSHKFTVVVLCATKVTKGAFGDMLDTPDPYVELFISTTPDSRKRTRHFNNDINPVWNETFEFILDPNQENVLEITLMDANYVMDETLGTATFPVSSMKVGEKKEVPFIFNQVTEMILEMSLEVCSCPDLRFSMALCDQEKTFRQQRKEHIRESMKKLLGPKNSEGLHSARDVPVVAILGSGGGFRAMVGFSGVMKALYESGILDCATYVAGLSGSTWYMSTLYSHPDFPEKGPEEINEELMKNVSHNPLLLLTPQKVKRYVESLWKKKSSGQPVTFTDIFGMLIGETLIHNRMNTTLSSLKEKVNTAQCPLPLFTCLHVKPDVSELMFADWVEFSPYEIGMAKYGTFMAPDLFGSKFFMGTVVKKYEENPLHFLMGVWGSAFSILFNRVLGVSGSQSRGSTMEEELENITTKHIVSNDSSDSDDESHEPKGTENEDAGSDYQSDNQASWIHRMIMALVSDSALFNTREGRAGKVHNFMLGLNLNTSYPLSPLSDFATQDSFDDDELDAAVADPDEFERIYEPLDVKSKKIHVVDSGLTFNLPYPLILRPQRGVDLIISFDFSARPSDSSPPFKELLLAEKWAKMNKLPFPKIDPYVFDREGLKECYVFKPKNPDMEKDCPTIIHFVLANINFRKYKAPGVPRETEEEKEIADFDIFDDPESPFSTFNFQYPNQAFKRLHDLMHFNTLNNIDVIKEAMVESIEYRRQNPSRCSVSLSNVEARRFFNKEFLSKPKA.

The phospholipid binding stretch occupies residues methionine 1–serine 178. The residue at position 2 (serine 2) is a Phosphoserine. The region spanning proline 6–phenylalanine 122 is the C2 domain. Ca(2+) contacts are provided by aspartate 40, threonine 41, aspartate 43, asparagine 65, aspartate 93, alanine 94, and asparagine 95. A PLA2c domain is found at serine 140–asparagine 740. The active-site Nucleophile is serine 228. Position 268 is a phosphothreonine (threonine 268). Residues glycine 409–glutamine 457 are disordered. Serine 434, serine 435, and serine 437 each carry phosphoserine. Position 505 is a phosphoserine; by MAPK (serine 505). The residue at position 515 (serine 515) is a Phosphoserine. A Glycyl lysine isopeptide (Lys-Gly) (interchain with G-Cter in SUMO2) cross-link involves residue lysine 541. The Proton acceptor role is filled by aspartate 549. A Glycyl lysine isopeptide (Lys-Gly) (interchain with G-Cter in SUMO2) cross-link involves residue lysine 606. Phosphoserine occurs at positions 727 and 729.

In terms of assembly, interacts with KAT5. In terms of processing, phosphorylated at both Ser-505 and Ser-727 in response to mitogenic stimuli.

It localises to the cytoplasm. It is found in the golgi apparatus membrane. The protein localises to the nucleus envelope. The enzyme catalyses a 1,2-diacyl-sn-glycero-3-phosphocholine + H2O = a 1-acyl-sn-glycero-3-phosphocholine + a fatty acid + H(+). It catalyses the reaction a 1-O-alkyl-2-acyl-sn-glycero-3-phosphocholine + H2O = a 1-O-alkyl-sn-glycero-3-phosphocholine + a fatty acid + H(+). It carries out the reaction a 1-acyl-sn-glycero-3-phosphocholine + H2O = sn-glycerol 3-phosphocholine + a fatty acid + H(+). The catalysed reaction is 1-hexadecanoyl-2-(5Z,8Z,11Z,14Z-eicosatetraenoyl)-sn-glycero-3-phosphocholine + H2O = 1-hexadecanoyl-sn-glycero-3-phosphocholine + (5Z,8Z,11Z,14Z)-eicosatetraenoate + H(+). The enzyme catalyses 1,2-di-(5Z,8Z,11Z,14Z-eicosatetraenoyl)-sn-glycero-3-phosphocholine + H2O = 1-(5Z,8Z,11Z,14Z-eicosatetraenoyl)-sn-glycero-3-phosphocholine + (5Z,8Z,11Z,14Z)-eicosatetraenoate + H(+). It catalyses the reaction 1-octadecanoyl-2-(5Z,8Z,11Z,14Z-eicosatetraenoyl)-sn-glycero-3-phosphocholine + H2O = 1-octadecanoyl-sn-glycero-3-phosphocholine + (5Z,8Z,11Z,14Z)-eicosatetraenoate + H(+). It carries out the reaction 1-hexadecanoyl-2-(9Z,12Z-octadecadienoyl)-sn-glycero-3-phosphocholine + H2O = (9Z,12Z)-octadecadienoate + 1-hexadecanoyl-sn-glycero-3-phosphocholine + H(+). The catalysed reaction is 1-octadecanoyl-2-(9Z,12Z,15Z-octadecatrienoyl)-sn-glycero-3-phosphocholine + H2O = (9Z,12Z,15Z)-octadecatrienoate + 1-octadecanoyl-sn-glycero-3-phosphocholine + H(+). The enzyme catalyses 1-(5Z,8Z,11Z,14Z-eicosatetraenoyl)-2-hexadecanoyl-sn-glycero-3-phosphocholine + H2O = 1-(5Z,8Z,11Z,14Z-eicosatetraenoyl)-sn-glycero-3-phosphocholine + hexadecanoate + H(+). It catalyses the reaction 1-O-hexadecyl-2-(5Z,8Z,11Z,14Z)-eicosatetraenoyl-sn-glycero-3-phosphocholine + H2O = 1-O-hexadecyl-sn-glycero-3-phosphocholine + (5Z,8Z,11Z,14Z)-eicosatetraenoate + H(+). It carries out the reaction 1,2-di-(9Z-octadecenoyl)-sn-glycero-3-phospho-(1'-sn-glycerol) + H2O = 1-(9Z-octadecenoyl)-sn-glycero-3-phospho-(1'-sn-glycerol) + (9Z)-octadecenoate + H(+). The catalysed reaction is 1-octadecanoyl-2-(5Z,8Z,11Z,14Z-eicosatetraenoyl)-sn-glycero-3-phosphate + H2O = 1-octadecanoyl-sn-glycero-3-phosphate + (5Z,8Z,11Z,14Z)-eicosatetraenoate + H(+). The enzyme catalyses 1-hexadecanoyl-sn-glycero-3-phosphocholine + H2O = sn-glycerol 3-phosphocholine + hexadecanoate + H(+). It catalyses the reaction 2-(prostaglandin E2)-sn-glycero-3-phosphoethanolamine + H2O = sn-glycero-3-phosphoethanolamine + prostaglandin E2 + H(+). It carries out the reaction 2-[(15S)-hydroxy-(5Z,8Z,11Z,13E)-eicosatetraenoyl]-sn-glycero-3-phosphocholine + H2O = (15S)-hydroxy-(5Z,8Z,11Z,13E)-eicosatetraenoate + sn-glycerol 3-phosphocholine + H(+). The catalysed reaction is 2-[(15R)-hydroxy-(5Z,8Z,11Z,13E)-eicosatetraenoyl]-sn-glycero-3-phosphocholine + H2O = (15R)-hydroxy-(5Z,8Z,11Z,13E)-eicosatetraenoate + sn-glycerol 3-phosphocholine + H(+). The enzyme catalyses 2-(prostaglandin E2)-sn-glycero-3-phosphocholine + H2O = prostaglandin E2 + sn-glycerol 3-phosphocholine + H(+). It catalyses the reaction 2-[(11R)-hydroxy-(5Z,8Z,12E,14Z)-eicosatetraenoyl]-sn-glycero-3-phosphocholine + H2O = (11R)-hydroxy-(5Z,8Z,12E,14Z)-eicosatetraenoate + sn-glycerol 3-phosphocholine + H(+). It carries out the reaction 1-(5Z,8Z,11Z,14Z-eicosatetraenoyl)-2-O-hexadecyl-sn-glycero-3-phosphocholine + H2O = 2-O-hexadecyl-sn-glycero-3-phosphocholine + (5Z,8Z,11Z,14Z)-eicosatetraenoate + H(+). The catalysed reaction is 1-octadecanoyl-2-(5Z,8Z,11Z,14Z-eicosatetraenoyl)-sn-glycero-3-phosphocholine + glycerol = 1-(5Z,8Z,11Z,14Z-eicosatetraenoyl)-glycerol + 1-octadecanoyl-sn-glycero-3-phosphocholine. The enzyme catalyses 1-octadecanoyl-2-(9Z,12Z,15Z-octadecatrienoyl)-sn-glycero-3-phosphocholine + glycerol = 1-(9Z,12Z,15Z-octadecatrienoyl)-glycerol + 1-octadecanoyl-sn-glycero-3-phosphocholine. The protein operates within membrane lipid metabolism; glycerophospholipid metabolism. It participates in lipid metabolism; arachidonate metabolism. It functions in the pathway lipid metabolism; prostaglandin biosynthesis. Its pathway is lipid metabolism; leukotriene B4 biosynthesis. With respect to regulation, activated by cytosolic calcium, which is necessary for binding to membrane lipids. Activated by phosphorylation in response to mitogenic stimuli. Functionally, has primarily calcium-dependent phospholipase and lysophospholipase activities, with a major role in membrane lipid remodeling and biosynthesis of lipid mediators of the inflammatory response. Plays an important role in embryo implantation and parturition through its ability to trigger prostanoid production. Preferentially hydrolyzes the ester bond of the fatty acyl group attached at sn-2 position of phospholipids (phospholipase A2 activity). Selectively hydrolyzes sn-2 arachidonoyl group from membrane phospholipids, providing the precursor for eicosanoid biosynthesis via the cyclooxygenase pathway. In an alternative pathway of eicosanoid biosynthesis, hydrolyzes sn-2 fatty acyl chain of eicosanoid lysophopholipids to release free bioactive eicosanoids. Hydrolyzes the ester bond of the fatty acyl group attached at sn-1 position of phospholipids (phospholipase A1 activity) only if an ether linkage rather than an ester linkage is present at the sn-2 position. This hydrolysis is not stereospecific. Has calcium-independent phospholipase A2 and lysophospholipase activities in the presence of phosphoinositides. Has O-acyltransferase activity. Catalyzes the transfer of fatty acyl chains from phospholipids to a primary hydroxyl group of glycerol (sn-1 or sn-3), potentially contributing to monoacylglycerol synthesis. This Pongo abelii (Sumatran orangutan) protein is Cytosolic phospholipase A2 (PLA2G4A).